Consider the following 407-residue polypeptide: E3 ubiquitin-protein ligase TRIM13 (407 aa).

The RING-type zinc finger occupies 10–58; the sequence is CPICCSLFDDPRVLPCSHNFCKKCLEGLLEGNVRNSLWRPSPFKCPTCR. The segment at 89–131 adopts a B box-type zinc-finger fold; sequence PKMPVCKGHLGQPLNIFCVTDMQLICGICATRGEHTKHVFSSI. Residues cysteine 94, histidine 97, cysteine 117, and histidine 123 each coordinate Zn(2+). Positions 172–200 form a coiled coil; that stretch reads LQLLTKDSDKVKEFFEKLQHTLDQKKNEI. A helical membrane pass occupies residues 316–336; that stretch reads LLLMMVVLLGLLIFFGPTVFL.

The protein belongs to the TRIM/RBCC family. As to quaternary structure, interacts (via C-terminal domain) with VCP. Interacts with AKT1; the interaction ubiquitinates AKT1 and leads to its proteasomal degradation. Interacts with MDM2; the interaction ubiquitinates AKT1 and leads to its proteasomal degradation. Interacts with p62/SQSTM1. Interacts with TRAF6. Interacts with IKBKG/NEMO. Post-translationally, auto-ubiquitinated; requires the RING-type zinc finger. Auto-polyubiquitination leads to proteasomal degradation.

It is found in the endoplasmic reticulum membrane. It catalyses the reaction S-ubiquitinyl-[E2 ubiquitin-conjugating enzyme]-L-cysteine + [acceptor protein]-L-lysine = [E2 ubiquitin-conjugating enzyme]-L-cysteine + N(6)-ubiquitinyl-[acceptor protein]-L-lysine.. It participates in protein modification; protein ubiquitination. Endoplasmic reticulum (ER) membrane anchored E3 ligase involved in the retrotranslocation and turnover of membrane and secretory proteins from the ER through a set of processes named ER-associated degradation (ERAD). This process acts on misfolded proteins as well as in the regulated degradation of correctly folded proteins. Enhances ionizing radiation-induced p53/TP53 stability and apoptosis via ubiquitinating MDM2 and AKT1 and decreasing AKT1 kinase activity through MDM2 and AKT1 proteasomal degradation. Regulates ER stress-induced autophagy, and may act as a tumor suppressor. Also plays a role in innate immune response by stimulating NF-kappa-B activity in the TLR2 signaling pathway. Ubiquitinates TRAF6 via the 'Lys-29'-linked polyubiquitination chain resulting in NF-kappa-B activation. Participates as well in T-cell receptor-mediated NF-kappa-B activation. In the presence of TNF, modulates the IKK complex by regulating IKBKG/NEMO ubiquitination leading to the repression of NF-kappa-B. The protein is E3 ubiquitin-protein ligase TRIM13 (Trim13) of Mus musculus (Mouse).